We begin with the raw amino-acid sequence, 450 residues long: Bifunctional apoptosis regulator (450 aa).

Residues 1–20 (MEEPQKNDLSMREQEEEHPV) show a composition bias toward basic and acidic residues. Positions 1-25 (MEEPQKNDLSMREQEEEHPVRSSGP) are disordered. Residues 1 to 140 (MEEPQKNDLS…PSTGRVNPQR (140 aa)) lie on the Cytoplasmic side of the membrane. The RING-type zinc-finger motif lies at 34 to 74 (CHCCYDTLVNPTTLNCGHSFCRHCLALWWMSSKKTECPECR). A helical transmembrane segment spans residues 141–161 (GGGFFSGVLTALTGVAVILLV). The Extracellular segment spans residues 162 to 331 (YHWRSRESEH…REPTWKQWRE (170 aa)). Residues 182-249 (WTMEEVVLWL…LTELERVRAL (68 aa)) enclose the SAM domain. N-linked (GlcNAc...) asparagine glycosylation is found at N232 and N308. Residues 332–352 (FLVKYSFLPYQLIAEFAWDWL) form a helical membrane-spanning segment. At 353–360 (EVHYWTSR) the chain is on the cytoplasmic side. The helical transmembrane segment at 361–381 (FLIVNAVLLSVLELFSFWRIW) threads the bilayer. Topologically, residues 382 to 404 (SRSELKTVPQRMWSHFWKVSTQG) are extracellular. The chain crosses the membrane as a helical span at residues 405-425 (LFMAMFWPLIPQFVCNCLFYW). Residues 426 to 450 (ALYFNPIINIDLVVKEVRRLETQVL) are Cytoplasmic-facing.

As to quaternary structure, interacts with CASP8, BCL2 and BCL2L1 through SAM domain and also with HIP1, IFT57, ESRRBL1 and BCAP31. Interacts with NGFR; this interaction inhibits NF-kappa-B and JNK-related signaling pathways. Post-translationally, mediates RING-dependent self-ubiquitination leading to proteasomal degradation.

It is found in the endoplasmic reticulum membrane. It catalyses the reaction S-ubiquitinyl-[E2 ubiquitin-conjugating enzyme]-L-cysteine + [acceptor protein]-L-lysine = [E2 ubiquitin-conjugating enzyme]-L-cysteine + N(6)-ubiquitinyl-[acceptor protein]-L-lysine.. In terms of biological role, membrane-bound E3 ubiquitin ligase that plays a role in several processes including apoptosis regulation or reticulum endoplasmic stress. Has anti-apoptotic activity, both for apoptosis triggered via death-receptors and via mitochondrial factors. Contributes to the dynamic control of IRE1/ERN1 signaling during ER stress by inducing BAX inhibitor 1/TMBIM6 proteasomal degradation. Promotes the activation of TGF-beta signaling by mediating the 'Lys-63'-linked ubiquitination of TGFBR1 which is critical to activate the pathway. Together with NGFR, negatively regulates NF-kappa-B and JNK-related signaling pathways. Promotes the proteasome-mediated degradation of PNPLA3, a protein involveld in lipid metabolism. The protein is Bifunctional apoptosis regulator (Bfar) of Mus musculus (Mouse).